The following is a 113-amino-acid chain: NTGAKAPRKHLANKAARKTAAPANAGIKKPHRYRPGTVALREIRKYQKSTDLLIRKLPFQRLVREIASEYKNDLRFQSSAVLALQEAAEAYMIGLFEDTNLCAIHGKRVTIMP.

A compositionally biased stretch (basic residues) spans 1–17 (NTGAKAPRKHLANKAAR). Residues 1–31 (NTGAKAPRKHLANKAARKTAAPANAGIKKPH) form a disordered region.

The protein belongs to the histone H3 family. In terms of assembly, the nucleosome is a histone octamer containing two molecules each of H2A, H2B, H3 and H4 assembled in one H3-H4 heterotetramer and two H2A-H2B heterodimers. The octamer wraps approximately 147 bp of DNA.

The protein localises to the nucleus. It localises to the chromosome. Its function is as follows. Core component of nucleosome. Nucleosomes wrap and compact DNA into chromatin, limiting DNA accessibility to the cellular machineries which require DNA as a template. Histones thereby play a central role in transcription regulation, DNA repair, DNA replication and chromosomal stability. DNA accessibility is regulated via a complex set of post-translational modifications of histones, also called histone code, and nucleosome remodeling. This Stylonychia lemnae (Ciliate) protein is Histone H3-8 (H3-8).